Consider the following 249-residue polypeptide: Coproheme decarboxylase (249 aa).

Fe-coproporphyrin III is bound by residues arginine 131, 145-149 (YPMDK), histidine 172, and glutamine 185. Residue tyrosine 145 is part of the active site.

This sequence belongs to the ChdC family. Type 1 subfamily. Requires Fe-coproporphyrin III as cofactor.

The enzyme catalyses Fe-coproporphyrin III + 2 H2O2 + 2 H(+) = heme b + 2 CO2 + 4 H2O. It carries out the reaction Fe-coproporphyrin III + H2O2 + H(+) = harderoheme III + CO2 + 2 H2O. The catalysed reaction is harderoheme III + H2O2 + H(+) = heme b + CO2 + 2 H2O. It functions in the pathway porphyrin-containing compound metabolism; protoheme biosynthesis. Functionally, involved in coproporphyrin-dependent heme b biosynthesis. Catalyzes the decarboxylation of Fe-coproporphyrin III (coproheme) to heme b (protoheme IX), the last step of the pathway. The reaction occurs in a stepwise manner with a three-propionate intermediate. This Staphylococcus haemolyticus (strain JCSC1435) protein is Coproheme decarboxylase.